The chain runs to 343 residues: MYIDTGIMSNNIFLFAFFALVGLTRIEAMPTKGSEGTWDVDYEDQEHTGITCRENEHYNSTRIECEDECNDRNNKLCYRFQQFCWCNEGYIRNSSHICVKLEDCLKDEEQKSETLASSANNDSSKRLEDDLKLFSHDSVSHTSLEPETQAQKFNGIINEETLDLVFGKPENSWAENKPLETKTQAQKFNGIINEETLDLVFGKPENSWAENKPLETETQAQKFNGIINEETLDLVFGKPENSWAENKPLETKTQAQKFNGIINEETLDLVFGKPENSWAENKPLETKTQAQKFNGIINEETLDLVFGKPENSWAENKPLETKTQTQKFNGIIDQYTRSIVFVF.

An N-terminal signal peptide occupies residues 1–28; sequence MYIDTGIMSNNIFLFAFFALVGLTRIEA. Positions 52-104 constitute a TIL domain; sequence CRENEHYNSTRIECEDECNDRNNKLCYRFQQFCWCNEGYIRNSSHICVKLEDC.

This sequence belongs to the polydnaviridae EGF-like motif protein family. As to quaternary structure, interacts with host PAP1, PAP3 and SPH2.

In terms of biological role, counteracts the host humoral immune response by inhibiting the processing and the amidolytic activity of host PAP1 and PAP3. Thereby, melanization of host hemolymph, normally producing several reactive intermediates toxic for viruses, is deregulated and proper immune response cannot occur. This is Protease inhibitor Egf1.5a (O1) from Microplitis demolitor bracovirus (isolate Webb) (MdBV).